Consider the following 476-residue polypeptide: Protein EARLY HEADING DATE 2 (476 aa).

Positions 1–13 are enriched in polar residues; sequence MLLSDLSSDQEAT. A disordered region spans residues 1 to 27; sequence MLLSDLSSDQEATGSNSHGGGGGGDRM. 2 consecutive C2H2-type zinc fingers follow at residues 106–128 and 156–186; these read FVCEVCNKGFQRDQNLQLHRRGH and YVCPEPTCVHHDPARALGDLTGIKKHFSRKH. 2 consecutive short sequence motifs (nuclear localization signal) follow at residues 124 to 131 and 178 to 185; these read HRRGHNLP and IKKHFSRK. The C2H2-type 2; degenerate zinc finger occupies 191–214; the sequence is WRCERCGKRYAVHSDWKAHVKNCG. The Zn(2+) site is built by Cys-193, Cys-196, His-209, Cys-213, Cys-220, Cys-222, His-235, and Cys-239. Residues 218–241 form a CCHC-type 2; atypical zinc finger; the sequence is YRCDCGILFSRKDSLLTHRAFCDA. The SHR-binding stretch occupies residues 228–240; it reads RKDSLLTHRAFCD.

The protein localises to the nucleus. Its function is as follows. Transcription activator that acts as a flowering master switch in both long and short days, independently of the circadian clock. Promotes flowering upstream of HD1 by up-regulating FTL1, FTL4, FTL5, FTL6, EHD1, HD3A and RFT1. Seems to repress FTL11 expression. May recognize the consensus motif 5'-TTTGTCGTAAT-3' in target gene promoters. This chain is Protein EARLY HEADING DATE 2, found in Oryza sativa subsp. indica (Rice).